A 574-amino-acid polypeptide reads, in one-letter code: Proline--tRNA ligase (574 aa).

Belongs to the class-II aminoacyl-tRNA synthetase family. ProS type 1 subfamily. In terms of assembly, homodimer.

It is found in the cytoplasm. It carries out the reaction tRNA(Pro) + L-proline + ATP = L-prolyl-tRNA(Pro) + AMP + diphosphate. In terms of biological role, catalyzes the attachment of proline to tRNA(Pro) in a two-step reaction: proline is first activated by ATP to form Pro-AMP and then transferred to the acceptor end of tRNA(Pro). As ProRS can inadvertently accommodate and process non-cognate amino acids such as alanine and cysteine, to avoid such errors it has two additional distinct editing activities against alanine. One activity is designated as 'pretransfer' editing and involves the tRNA(Pro)-independent hydrolysis of activated Ala-AMP. The other activity is designated 'posttransfer' editing and involves deacylation of mischarged Ala-tRNA(Pro). The misacylated Cys-tRNA(Pro) is not edited by ProRS. This Aeromonas hydrophila subsp. hydrophila (strain ATCC 7966 / DSM 30187 / BCRC 13018 / CCUG 14551 / JCM 1027 / KCTC 2358 / NCIMB 9240 / NCTC 8049) protein is Proline--tRNA ligase.